Reading from the N-terminus, the 179-residue chain is Large ribosomal subunit protein uL5 (179 aa).

The protein belongs to the universal ribosomal protein uL5 family. In terms of assembly, part of the 50S ribosomal subunit; part of the 5S rRNA/L5/L18/L25 subcomplex. Contacts the 5S rRNA and the P site tRNA. Forms a bridge to the 30S subunit in the 70S ribosome.

This is one of the proteins that bind and probably mediate the attachment of the 5S RNA into the large ribosomal subunit, where it forms part of the central protuberance. In the 70S ribosome it contacts protein S13 of the 30S subunit (bridge B1b), connecting the 2 subunits; this bridge is implicated in subunit movement. Contacts the P site tRNA; the 5S rRNA and some of its associated proteins might help stabilize positioning of ribosome-bound tRNAs. The polypeptide is Large ribosomal subunit protein uL5 (Listeria innocua serovar 6a (strain ATCC BAA-680 / CLIP 11262)).